The sequence spans 130 residues: Small ribosomal subunit protein uS8 (130 aa).

It belongs to the universal ribosomal protein uS8 family. As to quaternary structure, part of the 30S ribosomal subunit.

Its function is as follows. One of the primary rRNA binding proteins, it binds directly to 16S rRNA central domain where it helps coordinate assembly of the platform of the 30S subunit. The chain is Small ribosomal subunit protein uS8 from Methanococcoides burtonii (strain DSM 6242 / NBRC 107633 / OCM 468 / ACE-M).